Consider the following 349-residue polypeptide: Paired box protein Pax-4 (349 aa).

Residues 5 to 131 (GLSSVNQLGG…SSINRVLRAL (127 aa)) constitute a DNA-binding region (paired). The interval 8 to 64 (SVNQLGGLFVNGRPLPLDTRQQIVQLAIRGMRPCDISRSLKVSNGCVSKILGRYYRT) is PAI subdomain. The segment at 83–131 (AVVARIAQLKDEYPALFAWEIQRQLCAEGLCTQDKAPSVSSINRVLRAL) is RED subdomain. The homeobox DNA-binding region spans 170 to 229 (SHRNRTIFSPGQAEALEKEFQRGQYPDSVVRGKLAAATSLPEDTVRVWFSNRRAKWRRQE). Residues 278-349 (FCQLCWGAVP…APSTYYLHWP (72 aa)) form a transcription repression region.

Belongs to the paired homeobox family. Specifically expressed in pancreatic islets.

It is found in the nucleus. Plays an important role in the differentiation and development of pancreatic islet beta cells. Transcriptional repressor that competes with PAX6 in binding to a common element in the glucagon, insulin and somatostatin promoters. The chain is Paired box protein Pax-4 (Pax4) from Rattus norvegicus (Rat).